A 122-amino-acid chain; its full sequence is Large ribosomal subunit protein uL18 (122 aa).

The protein belongs to the universal ribosomal protein uL18 family. As to quaternary structure, part of the 50S ribosomal subunit; part of the 5S rRNA/L5/L18/L25 subcomplex. Contacts the 5S and 23S rRNAs.

This is one of the proteins that bind and probably mediate the attachment of the 5S RNA into the large ribosomal subunit, where it forms part of the central protuberance. This Synechococcus sp. (strain JA-2-3B'a(2-13)) (Cyanobacteria bacterium Yellowstone B-Prime) protein is Large ribosomal subunit protein uL18.